We begin with the raw amino-acid sequence, 614 residues long: MNREVVTMSTGNTLPPALAALASPLNDAQLNQLQQTVTQLNAQQLAWVSGYFWGLSQSNALSVPHISAGQTASAASGKLTIIFASQTGNAKGVAQALLKEAQAAGIQAQLFDASDYKGKDLAKETHVIFVASTNGEGEAPDNALALHEFLKSKKAPKLPNLKYGVLGLGDSSYQFFCQTGKDFDQFLENLGAQRLVERLDADVDYQAAATEWRKQVLSILKDELTGAAAVTSVATFAVSQTAESHYSKEQPYTASLSTSQKITGRDSGKDVRHIEIDLADSGITYQPGDALGVWYENRPQLVNALLDSVGLSGHEEVQVDGETLSLHSALTHHYEITAANPQLVAQFAELAQSEKLTSLAQDKEALREYATRTQVIDVLREEKVTLSAIQLLSLLRRLTPRLYSIASSQSEVGEEVHLTVGVVEYEYKGEQRLGGASSFLAHQLEEGAPVKVFVEHNNNFKLPSDDNAPLIMVGPGTGIAPFRSFIQERENRGAAGKNWLLFGDRTFTQDFLYQVEWQKYLKSGVLNRLDVAFSRDQHEKVYVQHRLLDQAELVWQWLQEGAYFYVCGDASRMAKDVHQALITVVEQQGGLNREQAEEYVSELRKAKRYQRDVY.

In terms of domain architecture, Flavodoxin-like spans 79–217 (LTIIFASQTG…AATEWRKQVL (139 aa)). FMN is bound by residues 85–90 (SQTGNA), 132–135 (STNG), and 168–177 (LGDSSYQFFC). Residues 249-463 (EQPYTASLST…VEHNNNFKLP (215 aa)) enclose the FAD-binding FR-type domain. FAD is bound by residues threonine 337, threonine 371, 401–404 (RLYS), 419–421 (TVG), tyrosine 425, and 434–437 (GGAS). NADP(+) is bound by residues 534–535 (SR), 540–544 (KVYVQ), and aspartate 576. Tyrosine 614 is a binding site for FAD.

The protein belongs to the NADPH-dependent sulphite reductase flavoprotein subunit CysJ family. In the N-terminal section; belongs to the flavodoxin family. It in the C-terminal section; belongs to the flavoprotein pyridine nucleotide cytochrome reductase family. In terms of assembly, alpha(8)-beta(8). The alpha component is a flavoprotein, the beta component is a hemoprotein. It depends on FAD as a cofactor. Requires FMN as cofactor.

It catalyses the reaction hydrogen sulfide + 3 NADP(+) + 3 H2O = sulfite + 3 NADPH + 4 H(+). Its pathway is sulfur metabolism; hydrogen sulfide biosynthesis; hydrogen sulfide from sulfite (NADPH route): step 1/1. In terms of biological role, component of the sulfite reductase complex that catalyzes the 6-electron reduction of sulfite to sulfide. This is one of several activities required for the biosynthesis of L-cysteine from sulfate. The flavoprotein component catalyzes the electron flow from NADPH -&gt; FAD -&gt; FMN to the hemoprotein component. In Vibrio cholerae serotype O1 (strain ATCC 39541 / Classical Ogawa 395 / O395), this protein is Sulfite reductase [NADPH] flavoprotein alpha-component.